The sequence spans 912 residues: Alpha-actinin-4 (912 aa).

Residues methionine 1 to histidine 267 form an actin-binding region. Residues glutamine 12–glycine 27 form an interaction with VCL region. The interval glutamine 12 to aspartate 31 is disordered. The segment covering asparagine 16–methionine 29 has biased composition (gly residues). Tyrosine 32 carries the phosphotyrosine modification. Residues arginine 41–asparagine 62 are interaction with VCL. Calponin-homology (CH) domains are found at residues lysine 51–alanine 155 and threonine 164–serine 270. The short motif at leucine 85–leucine 89 is the LXXLL motif element. The tract at residues lysine 109 to leucine 127 is interaction with VCL. Lysine 115 bears the N6-acetyllysine mark. The tract at residues threonine 178–tryptophan 193 is polyphosphoinositide (PIP2)-binding. Lysine 215 carries the post-translational modification N6-acetyllysine. Threonine 250 carries the post-translational modification Phosphothreonine. Spectrin repeat units lie at residues histidine 294–asparagine 404, histidine 414–lysine 519, glutamine 529–glutamate 640, and histidine 650–asparagine 753. Lysine 593 and lysine 626 each carry N6-acetyllysine. Serine 697 is subject to Phosphoserine. Residues tryptophan 737–leucine 912 form a mediates interaction with MICALL2 region. 2 consecutive EF-hand domains span residues glutamate 766–aspartate 801 and glutamine 807–aspartate 842. Aspartate 779 serves as a coordination point for Ca(2+). Lysine 780 carries the post-translational modification N6-acetyllysine. Residues aspartate 781 and glutamate 790 each contribute to the Ca(2+) site. Lysine 860 carries the post-translational modification N6-acetyllysine. A Phosphoserine modification is found at serine 910.

Belongs to the alpha-actinin family. In terms of assembly, homodimer; antiparallel. Interacts with MAGI1. Interacts with PDLIM2. Identified in a complex with CASK, IQGAP1, MAGI2, NPHS1, SPTAN1 and SPTBN1. Identified in a IGF2BP1-dependent mRNP granule complex containing untranslated mRNAs. Component of the CART complex, at least composed of ACTN4, HGS/HRS, MYO5B and TRIM3. Binds TRIM3 at the N-terminus. Interacts with MICALL2 (preferentially in opened conformation); stimulated by RAB13 activation. Interacts with PPARG and RARA. Binds to VCL; this interaction triggers VCL conformational changes. Interacts with SEPTIN14. Interacts with IGSF8.

Its subcellular location is the nucleus. It is found in the cytoplasm. The protein localises to the cell junction. It localises to the cytoskeleton. The protein resides in the stress fiber. Its subcellular location is the perinuclear region. F-actin cross-linking protein which is thought to anchor actin to a variety of intracellular structures. This is a bundling protein. Probably involved in vesicular trafficking via its association with the CART complex. The CART complex is necessary for efficient transferrin receptor recycling but not for EGFR degradation. Involved in tight junction assembly in epithelial cells probably through interaction with MICALL2. Links MICALL2 to the actin cytoskeleton and recruits it to the tight junctions. May also function as a transcriptional coactivator, stimulating transcription mediated by the nuclear hormone receptors PPARG and RARA. Association with IGSF8 regulates the immune synapse formation and is required for efficient T-cell activation. The chain is Alpha-actinin-4 from Mus musculus (Mouse).